The following is a 145-amino-acid chain: MIRKTKKIRKQRGSRSVGGGCTKKRRGAGHRGGRGQAGGNKHHWTWMVINDPKHFGKYGFKRPQKTIQQFKPINLSVIDNNIEKLLADEIAVKEDGQIVLDVTQLGYNKVLGKGSLSTAITIKAPKFSQSAISKIEDAGGIAEII.

Composition is skewed to basic residues over residues 1-13 (MIRK…KQRG) and 22-33 (TKKRRGAGHRGG). Residues 1–41 (MIRKTKKIRKQRGSRSVGGGCTKKRRGAGHRGGRGQAGGNK) form a disordered region.

This sequence belongs to the universal ribosomal protein uL15 family. In terms of assembly, part of the 50S ribosomal subunit.

Functionally, binds to the 23S rRNA. The chain is Large ribosomal subunit protein uL15 from Methanosphaera stadtmanae (strain ATCC 43021 / DSM 3091 / JCM 11832 / MCB-3).